The primary structure comprises 142 residues: Large ribosomal subunit protein uL13 (142 aa).

The protein belongs to the universal ribosomal protein uL13 family. As to quaternary structure, part of the 50S ribosomal subunit.

This protein is one of the early assembly proteins of the 50S ribosomal subunit, although it is not seen to bind rRNA by itself. It is important during the early stages of 50S assembly. The protein is Large ribosomal subunit protein uL13 of Glaesserella parasuis serovar 5 (strain SH0165) (Haemophilus parasuis).